A 290-amino-acid chain; its full sequence is Shikimate dehydrogenase (NADP(+)) (290 aa).

Shikimate-binding positions include Ser-24 to Ser-26 and Thr-71. Lys-75 (proton acceptor) is an active-site residue. Residues Asn-96 and Asp-111 each contribute to the shikimate site. NADP(+) contacts are provided by residues Gly-136–Ala-140, Asn-160–Arg-165, and Leu-233. Tyr-235 contributes to the shikimate binding site. Position 256 (Gly-256) interacts with NADP(+).

Belongs to the shikimate dehydrogenase family. In terms of assembly, homodimer.

It catalyses the reaction shikimate + NADP(+) = 3-dehydroshikimate + NADPH + H(+). It functions in the pathway metabolic intermediate biosynthesis; chorismate biosynthesis; chorismate from D-erythrose 4-phosphate and phosphoenolpyruvate: step 4/7. Its function is as follows. Involved in the biosynthesis of the chorismate, which leads to the biosynthesis of aromatic amino acids. Catalyzes the reversible NADPH linked reduction of 3-dehydroshikimate (DHSA) to yield shikimate (SA). The polypeptide is Shikimate dehydrogenase (NADP(+)) (Methanopyrus kandleri (strain AV19 / DSM 6324 / JCM 9639 / NBRC 100938)).